A 534-amino-acid chain; its full sequence is MTTPTNFTTEIDKLHAEITRLETGFYENVNSFFLCSMALIIFFMQCGFAYLEAGAVRSKNTTNILIKNLLDSCICIIGYWAIGWALAYGDSGEGVNLFVGHSQFFLSGFSDYPRFFFQYVFSATAATIVSGAVAERCEFITYVTYCTVISTFIYPVLTHWGWTENGWMAKGITSGIIDTKYDDFAGSGLVHLCGGSISFLAAWIMGPRIGKFPDDEDDESDEILGHSVPFTALGGFILMFGFLAFNGGSVASISHAGDGHTVALAMINTILSGAFAALIYLGVHYYQHGKWTLLLTINACLSGMVAACAGCNKMEPWACIWVGLGAGLIYLAFSKLMIRLKIDDPLDAFAVHAGGGFWGLMSSSIISHGGVAYALADAVSGAKNSGDHLTQAFAQLGWQMICALAIIAWSLGVMLPIFWILKKTGKLRVSEEVEINGLDVFKHGEMAYPLRAYGHGWHDFERANKIQAFSAKITVGEGKNTRIMKIHPEMSIEQLASVYDRSGNIIPMPKKSRTLFTNSAERKMSQMMYDENKM.

11 helical membrane-spanning segments follow: residues 31–51 (SFFL…FAYL), 69–89 (LLDS…LAYG), 115–135 (FFFQ…AVAE), 139–159 (FITY…VLTH), 184–204 (FAGS…AAWI), 223–243 (ILGH…FGFL), 263–283 (ALAM…YLGV), 291–311 (WTLL…CAGC), 318–338 (ACIW…KLMI), 346–366 (LDAF…SSII), and 401–421 (ICAL…FWIL).

The protein belongs to the ammonia transporter channel (TC 1.A.11.2) family.

The protein resides in the membrane. In terms of biological role, involved in the uptake of ammonia. In Caenorhabditis elegans, this protein is Putative ammonium transporter 1 (amt-1).